Here is an 853-residue protein sequence, read N- to C-terminus: DNA mismatch repair protein MutS (853 aa).

Position 613-620 (613-620) interacts with ATP; that stretch reads GPNMGGKS.

This sequence belongs to the DNA mismatch repair MutS family.

Its function is as follows. This protein is involved in the repair of mismatches in DNA. It is possible that it carries out the mismatch recognition step. This protein has a weak ATPase activity. This Vibrio campbellii (strain ATCC BAA-1116) protein is DNA mismatch repair protein MutS.